The sequence spans 646 residues: ATP-dependent rRNA helicase SPB4 (646 aa).

Residues 15–43 (WGALTPSLAPWILDYLSSMGFEQPTPVQK) carry the Q motif motif. The region spanning 46–247 (FDIFRGNKDV…TVGLLYPHKI (202 aa)) is the Helicase ATP-binding domain. ATP is bound at residue 59–66 (AVTGSGKT). A DEAD box motif is present at residues 195–198 (DEAD). Positions 284–434 (ALCQLLERLE…PLAKPPVSVT (151 aa)) constitute a Helicase C-terminal domain. Basic and acidic residues-rich tracts occupy residues 539–548 (KKEKAAREAQ) and 566–581 (NEAW…VKAA). The interval 539 to 646 (KKEKAAREAQ…GGDEFEGFDD (108 aa)) is disordered. Positions 572–623 (KHEHEDVKAARREKKRRKREAQRLGDMTEPEREEQRKLDEMIAEVRRRNAEA) form a coiled coil. Over residues 582–591 (RREKKRRKRE) the composition is skewed to basic residues. A compositionally biased stretch (basic and acidic residues) spans 600-621 (EPEREEQRKLDEMIAEVRRRNA). Residues 622-631 (EAPTPAAQAA) show a composition bias toward low complexity.

Belongs to the DEAD box helicase family. DDX55/SPB4 subfamily. As to quaternary structure, component of pre-60S ribosomal complexes.

It is found in the nucleus. It localises to the nucleolus. The catalysed reaction is ATP + H2O = ADP + phosphate + H(+). In terms of biological role, ATP-binding RNA helicase involved in the biogenesis of 60S ribosomal subunits. Binds 90S pre-ribosomal particles and dissociates from pre-60S ribosomal particles after processing of 27SB pre-rRNA. Required for the normal formation of 18S rRNA through the processing of pre-rRNAs at sites A0, A1 and A2, and the normal formation of 25S and 5.8S rRNAs through the processing of pre-rRNAs at sites C1 and C2. The protein is ATP-dependent rRNA helicase SPB4 of Chaetomium globosum (strain ATCC 6205 / CBS 148.51 / DSM 1962 / NBRC 6347 / NRRL 1970) (Soil fungus).